The chain runs to 127 residues: Small ribosomal subunit protein uS13 (127 aa).

Residues 90-127 (RRHRQGLPVRGQRTRTNARTRRGRRLTVAGKKKTPAKK) are disordered. Over residues 101–127 (QRTRTNARTRRGRRLTVAGKKKTPAKK) the composition is skewed to basic residues.

The protein belongs to the universal ribosomal protein uS13 family. Part of the 30S ribosomal subunit. Forms a loose heterodimer with protein S19. Forms two bridges to the 50S subunit in the 70S ribosome.

In terms of biological role, located at the top of the head of the 30S subunit, it contacts several helices of the 16S rRNA. In the 70S ribosome it contacts the 23S rRNA (bridge B1a) and protein L5 of the 50S subunit (bridge B1b), connecting the 2 subunits; these bridges are implicated in subunit movement. Contacts the tRNAs in the A and P-sites. In Synechocystis sp. (strain ATCC 27184 / PCC 6803 / Kazusa), this protein is Small ribosomal subunit protein uS13.